The following is a 349-amino-acid chain: ATP phosphoribosyltransferase regulatory subunit (349 aa).

Residues 327-349 (GRGRGVRPRRASARGGRARARPR) are disordered. Basic residues predominate over residues 330 to 349 (RGVRPRRASARGGRARARPR).

It belongs to the class-II aminoacyl-tRNA synthetase family. HisZ subfamily. As to quaternary structure, heteromultimer composed of HisG and HisZ subunits.

The protein resides in the cytoplasm. The protein operates within amino-acid biosynthesis; L-histidine biosynthesis; L-histidine from 5-phospho-alpha-D-ribose 1-diphosphate: step 1/9. Required for the first step of histidine biosynthesis. May allow the feedback regulation of ATP phosphoribosyltransferase activity by histidine. The chain is ATP phosphoribosyltransferase regulatory subunit from Anaeromyxobacter sp. (strain K).